The following is a 1714-amino-acid chain: Collagen alpha-1(XXIV) chain (1714 aa).

The N-terminal stretch at 1–35 (MHLRAHRTRRGKVSPTAKTKSLLHFIVLCVAGVVV) is a signal peptide. Residues 141–217 (KLVVHIRGKQ…MNNNSIHFEG (77 aa)) form the Laminin G-like domain. N155, N321, and N376 each carry an N-linked (GlcNAc...) asparagine glycan. Collagen-like domains follow at residues 487-542 (LRGP…PGFS), 552-611 (GDQG…EGNP), 660-719 (GPAG…KGEQ), 741-797 (GPPG…RGPP), 798-857 (GPPG…TGPV), 858-887 (GLPG…QGEK), 888-947 (GVMG…KGEK), 948-1007 (GDQG…PGEM), 1011-1052 (GPPG…PGAP), 1053-1112 (GEEG…PGQR), 1116-1170 (GKKG…GIPG), 1172-1196 (RGHQ…PGED), 1201-1249 (GPPG…GEPG), 1252-1306 (GEQG…GNPG), 1309-1353 (GPPG…QGPK), 1354-1413 (GEQG…EGDA), and 1420-1479 (GPKG…PGPR). Positions 487–1481 (LRGPKGDTGP…PPGAPGPRKQ (995 aa)) are disordered. A compositionally biased stretch (pro residues) spans 496-505 (PPGPPGPAGI). Low complexity-rich tracts occupy residues 574–587 (HPGL…QGIP) and 685–701 (SVGP…PGPM). Over residues 893-902 (PGPPGVPGPI) the composition is skewed to pro residues. The segment covering 985–1019 (DRGLPGEPGLRGLQGDVGPPGEMGMEGPPGTEGES) has biased composition (low complexity). Gly residues-rich tracts occupy residues 1035–1044 (GSVGGTGEPG) and 1065–1074 (GVPGGRGLPG). Composition is skewed to low complexity over residues 1132–1145 (SRGP…SGPK) and 1174–1186 (HQGQ…LPGP). A compositionally biased stretch (basic and acidic residues) spans 1256–1266 (LKGERGSEGNK). The segment covering 1271–1293 (APGPSGKPGIPGLQGLLGPKGIQ) has biased composition (low complexity). Residues 1318-1327 (GIRGGPGRTG) are compositionally biased toward gly residues. Pro residues predominate over residues 1466-1476 (QPGPPGPPGAP). The 200-residue stretch at 1515-1714 (EEIFKTLNYL…YIDSSSVCFL (200 aa)) folds into the Fibrillar collagen NC1 domain.

The protein belongs to the fibrillar collagen family.

Its subcellular location is the secreted. The protein resides in the extracellular space. It localises to the extracellular matrix. In terms of biological role, may participate in regulating type I collagen fibrillogenesis at specific anatomical locations during fetal development. The polypeptide is Collagen alpha-1(XXIV) chain (COL24A1) (Homo sapiens (Human)).